The sequence spans 143 residues: uncharacterized protein (143 aa).

Positions 1–16 (MSRNRLFLVAGSLAVA) are cleaved as a signal peptide. A helical membrane pass occupies residues 114-134 (GAYVFLGPGFTPGSPSGGSGG).

It is found in the membrane. This is an uncharacterized protein from Mycobacterium tuberculosis (strain CDC 1551 / Oshkosh).